The chain runs to 55 residues: Large ribosomal subunit protein bL33 (55 aa).

It belongs to the bacterial ribosomal protein bL33 family.

The sequence is that of Large ribosomal subunit protein bL33 from Proteus mirabilis (strain HI4320).